Consider the following 450-residue polypeptide: Glucose-6-phosphate isomerase (450 aa).

Thr-39 bears the Phosphothreonine mark. Glu-291 acts as the Proton donor in catalysis. Residues His-312 and Lys-426 contribute to the active site.

It belongs to the GPI family.

The protein resides in the cytoplasm. The catalysed reaction is alpha-D-glucose 6-phosphate = beta-D-fructose 6-phosphate. It participates in carbohydrate biosynthesis; gluconeogenesis. Its pathway is carbohydrate degradation; glycolysis; D-glyceraldehyde 3-phosphate and glycerone phosphate from D-glucose: step 2/4. Catalyzes the reversible isomerization of glucose-6-phosphate to fructose-6-phosphate. This chain is Glucose-6-phosphate isomerase, found in Bacillus thuringiensis (strain Al Hakam).